Here is a 284-residue protein sequence, read N- to C-terminus: D-tagatose-1,6-bisphosphate aldolase subunit GatY (284 aa).

Asp82 functions as the Proton donor in the catalytic mechanism. Residues His83 and His180 each contribute to the Zn(2+) site. Gly181 lines the dihydroxyacetone phosphate pocket. Zn(2+) is bound at residue His208. Dihydroxyacetone phosphate contacts are provided by residues 209 to 211 (GAS) and 230 to 233 (NVAT).

This sequence belongs to the class II fructose-bisphosphate aldolase family. TagBP aldolase GatY subfamily. Forms a complex with GatZ. Requires Zn(2+) as cofactor.

It carries out the reaction D-tagatofuranose 1,6-bisphosphate = D-glyceraldehyde 3-phosphate + dihydroxyacetone phosphate. It functions in the pathway carbohydrate metabolism; D-tagatose 6-phosphate degradation; D-glyceraldehyde 3-phosphate and glycerone phosphate from D-tagatose 6-phosphate: step 2/2. In terms of biological role, catalytic subunit of the tagatose-1,6-bisphosphate aldolase GatYZ, which catalyzes the reversible aldol condensation of dihydroxyacetone phosphate (DHAP or glycerone-phosphate) with glyceraldehyde 3-phosphate (G3P) to produce tagatose 1,6-bisphosphate (TBP). Requires GatZ subunit for full activity and stability. Is involved in the catabolism of galactitol. This chain is D-tagatose-1,6-bisphosphate aldolase subunit GatY, found in Escherichia coli (strain SMS-3-5 / SECEC).